We begin with the raw amino-acid sequence, 544 residues long: Chaperonin GroEL (544 aa).

Residues T29 to P32, K50, D86 to T90, G414, N477 to V479, and D493 contribute to the ATP site.

It belongs to the chaperonin (HSP60) family. Forms a cylinder of 14 subunits composed of two heptameric rings stacked back-to-back. Interacts with the co-chaperonin GroES.

Its subcellular location is the cytoplasm. The catalysed reaction is ATP + H2O + a folded polypeptide = ADP + phosphate + an unfolded polypeptide.. Together with its co-chaperonin GroES, plays an essential role in assisting protein folding. The GroEL-GroES system forms a nano-cage that allows encapsulation of the non-native substrate proteins and provides a physical environment optimized to promote and accelerate protein folding. In Campylobacter curvus (strain 525.92), this protein is Chaperonin GroEL.